The primary structure comprises 394 residues: Gastricsin (394 aa).

An N-terminal signal peptide occupies residues 1 to 16; sequence MKWMVVVLLCLPLLEA. The propeptide at 17–65 is activation peptide; that stretch reads TQIKVPLKKIKSIREVLREKGLLGDFLKNHKPQHARKFFRNRLAKTGDF. Residues 79–391 enclose the Peptidase A1 domain; the sequence is YFGQISLGTP…DLANNRVGFA (313 aa). Residue Asp97 is part of the active site. 2 cysteine pairs are disulfide-bonded: Cys110–Cys115 and Cys273–Cys277. Residue Thr283 is part of the active site. A disulfide bridge connects residues Cys316 and Cys349.

This sequence belongs to the peptidase A1 family.

It is found in the secreted. It carries out the reaction More restricted specificity than pepsin A, but shows preferential cleavage at Tyr-|-Xaa bonds. High activity on hemoglobin.. Its function is as follows. Hydrolyzes a variety of proteins. This Cavia porcellus (Guinea pig) protein is Gastricsin (PGC).